A 214-amino-acid polypeptide reads, in one-letter code: 3-isopropylmalate dehydratase small subunit (214 aa).

This sequence belongs to the LeuD family. LeuD type 1 subfamily. As to quaternary structure, heterodimer of LeuC and LeuD.

The enzyme catalyses (2R,3S)-3-isopropylmalate = (2S)-2-isopropylmalate. Its pathway is amino-acid biosynthesis; L-leucine biosynthesis; L-leucine from 3-methyl-2-oxobutanoate: step 2/4. Functionally, catalyzes the isomerization between 2-isopropylmalate and 3-isopropylmalate, via the formation of 2-isopropylmaleate. This Alcanivorax borkumensis (strain ATCC 700651 / DSM 11573 / NCIMB 13689 / SK2) protein is 3-isopropylmalate dehydratase small subunit.